The following is a 420-amino-acid chain: Histidine--tRNA ligase (420 aa).

This sequence belongs to the class-II aminoacyl-tRNA synthetase family. In terms of assembly, homodimer.

Its subcellular location is the cytoplasm. It carries out the reaction tRNA(His) + L-histidine + ATP = L-histidyl-tRNA(His) + AMP + diphosphate + H(+). The protein is Histidine--tRNA ligase of Nitrosomonas europaea (strain ATCC 19718 / CIP 103999 / KCTC 2705 / NBRC 14298).